A 434-amino-acid polypeptide reads, in one-letter code: Protein TolB homolog (434 aa).

An N-terminal signal peptide occupies residues 1 to 27; sequence MRSTRNSFACLCIMLFGMLFVPFTLRA. The disordered stretch occupies residues 413-434; it reads SNQRPLLNMQGEQQQPSWSVSK.

The protein belongs to the TolB family.

Its subcellular location is the periplasm. This chain is Protein TolB homolog, found in Chlorobaculum tepidum (strain ATCC 49652 / DSM 12025 / NBRC 103806 / TLS) (Chlorobium tepidum).